Here is a 162-residue protein sequence, read N- to C-terminus: NADH-quinone oxidoreductase subunit I (162 aa).

2 consecutive 4Fe-4S ferredoxin-type domains span residues Leu53–Glu83 and Arg93–Asn122. Residues Cys63, Cys66, Cys69, Cys73, Cys102, Cys105, Cys108, and Cys112 each coordinate [4Fe-4S] cluster.

The protein belongs to the complex I 23 kDa subunit family. As to quaternary structure, NDH-1 is composed of 14 different subunits. Subunits NuoA, H, J, K, L, M, N constitute the membrane sector of the complex. [4Fe-4S] cluster serves as cofactor.

It is found in the cell inner membrane. It carries out the reaction a quinone + NADH + 5 H(+)(in) = a quinol + NAD(+) + 4 H(+)(out). Functionally, NDH-1 shuttles electrons from NADH, via FMN and iron-sulfur (Fe-S) centers, to quinones in the respiratory chain. The immediate electron acceptor for the enzyme in this species is believed to be ubiquinone. Couples the redox reaction to proton translocation (for every two electrons transferred, four hydrogen ions are translocated across the cytoplasmic membrane), and thus conserves the redox energy in a proton gradient. The sequence is that of NADH-quinone oxidoreductase subunit I from Paramagnetospirillum magneticum (strain ATCC 700264 / AMB-1) (Magnetospirillum magneticum).